The following is a 715-amino-acid chain: ATP-dependent zinc metalloprotease YME1L1 (715 aa).

Topologically, residues 1–237 are mitochondrial matrix; it reads MFSLSSTVQP…TNDSLRRTRL (237 aa). The tract at residues 34–54 is disordered; the sequence is NTPVSQKQHRDTVPEHEAPSS. The span at 41-52 shows a compositional bias: basic and acidic residues; the sequence is QHRDTVPEHEAP. A helical transmembrane segment spans residues 238–258; sequence ILFVLLLFGIYGLLKNPFLSV. Over 259 to 715 the chain is Mitochondrial intermembrane; sequence RFRTTTGLDS…VLEGKKLEVR (457 aa). The ATP site is built by valine 283, threonine 325, glycine 326, lysine 327, threonine 328, and leucine 329. A Zn(2+)-binding site is contributed by histidine 541. Residue glutamate 542 is part of the active site. Residues histidine 545 and aspartate 619 each contribute to the Zn(2+) site.

This sequence in the N-terminal section; belongs to the AAA ATPase family. The protein in the C-terminal section; belongs to the peptidase M41 family. As to quaternary structure, homohexamer; may also form heterohexamers. Exists in several complexes of 600-1100 kDa. Interacts with AFG1L. It depends on Zn(2+) as a cofactor. Post-translationally, proteolytically processed by mitochondrial processing peptidase (MPP) to generate the mature form. Degraded in an OMA1-dependent manner in response to oxidative stress. In terms of tissue distribution, detected in heart and skeletal muscle (at protein level).

It localises to the mitochondrion inner membrane. The protein localises to the mitochondrion. It carries out the reaction ATP + H2O = ADP + phosphate + H(+). Its function is as follows. ATP-dependent metalloprotease that catalyzes the degradation of folded and unfolded proteins with a suitable degron sequence in the mitochondrial intermembrane region. Plays an important role in regulating mitochondrial morphology and function by cleaving OPA1 at position S2, giving rise to a form of OPA1 that promotes maintenance of normal mitochondrial structure and mitochondrial protein metabolism. Ensures cell proliferation, maintains normal cristae morphology and complex I respiration activity, promotes antiapoptotic activity and protects mitochondria from the accumulation of oxidatively damaged membrane proteins. Required to control the accumulation of nonassembled respiratory chain subunits (NDUFB6, OX4 and ND1). Involved in the mitochondrial adaptation in response to various signals, such as stress or developmental cues, by mediating degradation of mitochondrial proteins to rewire the mitochondrial proteome. Catalyzes degradation of mitochondrial proteins, such as translocases, lipid transfer proteins and metabolic enzymes in response to nutrient starvation in order to limit mitochondrial biogenesis: mechanistically, YME1L is activated by decreased phosphatidylethanolamine levels caused by LPIN1 activity in response to mTORC1 inhibition. Acts as a regulator of adult neural stem cell self-renewal by promoting mitochondrial proteome rewiring, preserving neural stem and progenitor cells self-renewal. Required for normal, constitutive degradation of PRELID1. Catalyzes the degradation of OMA1 in response to membrane depolarization. Mediates degradation of TIMM17A downstream of the integrated stress response (ISR). Catalyzes degradation of MICU1 when MICU1 is not assembled via an interchain disulfide. The sequence is that of ATP-dependent zinc metalloprotease YME1L1 (Yme1l1) from Mus musculus (Mouse).